Here is a 523-residue protein sequence, read N- to C-terminus: GMP synthase [glutamine-hydrolyzing] (523 aa).

The region spanning 8 to 205 (KILILDFGSQ…VVNICGCETK (198 aa)) is the Glutamine amidotransferase type-1 domain. The active-site Nucleophile is the Cys85. Catalysis depends on residues His179 and Glu181. The GMPS ATP-PPase domain maps to 206-398 (WTAENIIEDA…LGLPAEMINR (193 aa)). 233 to 239 (SGGVDSS) serves as a coordination point for ATP.

As to quaternary structure, homodimer.

It carries out the reaction XMP + L-glutamine + ATP + H2O = GMP + L-glutamate + AMP + diphosphate + 2 H(+). It functions in the pathway purine metabolism; GMP biosynthesis; GMP from XMP (L-Gln route): step 1/1. Functionally, catalyzes the synthesis of GMP from XMP. The chain is GMP synthase [glutamine-hydrolyzing] from Haemophilus influenzae (strain 86-028NP).